The following is a 231-amino-acid chain: Thiamine import ATP-binding protein ThiQ (231 aa).

The region spanning leucine 2–glycine 230 is the ABC transporter domain. Glycine 32 to serine 39 contributes to the ATP binding site.

This sequence belongs to the ABC transporter superfamily. Thiamine importer (TC 3.A.1.19.1) family. As to quaternary structure, the complex is composed of two ATP-binding proteins (ThiQ), two transmembrane proteins (ThiP) and a solute-binding protein (ThiB).

The protein localises to the cell inner membrane. It carries out the reaction thiamine(out) + ATP + H2O = thiamine(in) + ADP + phosphate + H(+). Functionally, part of the ABC transporter complex ThiBPQ involved in thiamine import. Responsible for energy coupling to the transport system. This chain is Thiamine import ATP-binding protein ThiQ, found in Ruegeria sp. (strain TM1040) (Silicibacter sp.).